The following is a 560-amino-acid chain: (E)-beta-farnesene synthase (560 aa).

Aspartate 312, aspartate 316, aspartate 457, and glutamate 465 together coordinate Mg(2+). Positions 312 to 316 match the DDXXD motif motif; that stretch reads DDTFD.

The protein belongs to the terpene synthase family. It depends on Mg(2+) as a cofactor. The cofactor is Co(2+). Mn(2+) serves as cofactor.

It is found in the cytoplasm. It catalyses the reaction (2E,6E)-farnesyl diphosphate = (E)-beta-farnesene + diphosphate. It participates in secondary metabolite biosynthesis; terpenoid biosynthesis. Functionally, sesquiterpene cyclase catalyzing the production of beta-farnesene from farnesyl diphosphate. This Citrus junos (Yuzu) protein is (E)-beta-farnesene synthase.